The primary structure comprises 482 residues: ADP-ribosylation factor GTPase-activating protein effector protein 1 (482 aa).

The interval 116 to 156 (QHKSTHSHHINHQTHPIHSSSSNSNSNNRIPTKTDSSKQHT) is disordered. The segment covering 118–127 (KSTHSHHINH) has biased composition (basic residues). Over residues 134-143 (SSSSNSNSNN) the composition is skewed to low complexity. The Arf-GAP domain maps to 170 to 297 (DELLSIVRKI…FVIDSNQGRE (128 aa)). The C4-type zinc finger occupies 186–210 (CCDCGSTATVEWVSINLLCILCIKC).

The protein localises to the cytoplasm. Functionally, GTPase-activating protein (GAP) for the ADP ribosylation factors ARF1 and ARF2. May be involved in the endocytic pathway. This chain is ADP-ribosylation factor GTPase-activating protein effector protein 1 (AGE1), found in Saccharomyces cerevisiae (strain ATCC 204508 / S288c) (Baker's yeast).